Consider the following 458-residue polypeptide: 5-hydroxytryptamine receptor 2C (458 aa).

An N-terminal signal peptide occupies residues 1–32 (MVNLRNAVHSFLVHLIGLLVWQSDISVSPVAA). Residues 33-55 (IVTDIFNTSDGGRFKFPDGVQNW) lie on the Extracellular side of the membrane. Asn39 is a glycosylation site (N-linked (GlcNAc...) asparagine). A helical membrane pass occupies residues 56 to 80 (PALSIVIIIIMTIGGNILVIMAVSM). Over 81 to 86 (EKKLHN) the chain is Cytoplasmic. A helical membrane pass occupies residues 87-111 (ATNYFLMSLAIADMLVGLLVMPLSL). The Extracellular segment spans residues 112 to 128 (LAILYDYVWPLPRYLCP). A disulfide bridge connects residues Cys127 and Cys207. A helical transmembrane segment spans residues 129 to 151 (VWISLDVLFSTASIMHLCAISLD). Ergotamine is bound at residue Thr139. Residues 151–153 (DRY) carry the DRY motif; important for ligand-induced conformation changes motif. Topologically, residues 152–167 (RYVAIRNPIEHSRFNS) are cytoplasmic. The chain crosses the membrane as a helical span at residues 168 to 189 (RTKAIMKIAIVWAISIGVSVPI). Residues 190–213 (PVIGLRDEEKVFVNNTTCVLNDPN) are Extracellular-facing. Asn204 carries an N-linked (GlcNAc...) asparagine glycan. Residue Leu209 participates in ergotamine binding. A helical transmembrane segment spans residues 214–236 (FVLIGSFVAFFIPLTIMVITYCL). The Cytoplasmic portion of the chain corresponds to 237 to 311 (TIYVLRRQAL…AINNERKASK (75 aa)). The disordered stretch occupies residues 274-301 (EENSANPNQDQNARRRKKKERRPRGTMQ). A compositionally biased stretch (basic residues) spans 287 to 297 (RRRKKKERRPR). The chain crosses the membrane as a helical span at residues 312–336 (VLGIVFFVFLIMWCPFFITNILSVL). Cys337 and Cys341 are disulfide-bonded. Topologically, residues 337 to 347 (CEKSCNQKLME) are extracellular. The helical transmembrane segment at 348 to 370 (KLLNVFVWIGYVCSGINPLVYTL) threads the bilayer. The short motif at 364-368 (NPLVY) is the NPxxY motif; important for ligand-induced conformation changes and signaling element. The Cytoplasmic segment spans residues 371–458 (FNKIYRRAFS…SVVSERISSV (88 aa)). The short motif at 456–458 (SSV) is the PDZ-binding element.

This sequence belongs to the G-protein coupled receptor 1 family. Interacts with MPDZ. Interacts with ARRB2. Interacts with MPP3; this interaction stabilizes the receptor at the plasma membrane and prevents the desensitization of the HTR2C receptor-mediated calcium response. Post-translationally, N-glycosylated. Detected in brain.

The protein resides in the cell membrane. Its activity is regulated as follows. Inhibited by inverse agonist ritanserin. In terms of biological role, G-protein coupled receptor for 5-hydroxytryptamine (serotonin). Also functions as a receptor for various drugs and psychoactive substances, including ergot alkaloid derivatives, 1-2,5,-dimethoxy-4-iodophenyl-2-aminopropane (DOI) and lysergic acid diethylamide (LSD). Ligand binding causes a conformation change that triggers signaling via guanine nucleotide-binding proteins (G proteins) and modulates the activity of downstream effectors. HTR2C is coupled to G(q)/G(11) G alpha proteins and activates phospholipase C-beta, releasing diacylglycerol (DAG) and inositol 1,4,5-trisphosphate (IP3) second messengers that modulate the activity of phosphatidylinositol 3-kinase and promote the release of Ca(2+) ions from intracellular stores, respectively. Beta-arrestin family members inhibit signaling via G proteins and mediate activation of alternative signaling pathways. Regulates neuronal activity via the activation of short transient receptor potential calcium channels in the brain, and thereby modulates the activation of pro-opiomelanocortin neurons and the release of CRH that then regulates the release of corticosterone. Plays a role in the regulation of appetite and eating behavior, responses to anxiogenic stimuli and stress. Plays a role in insulin sensitivity and glucose homeostasis. This is 5-hydroxytryptamine receptor 2C from Homo sapiens (Human).